Reading from the N-terminus, the 174-residue chain is uncharacterized protein (174 aa).

The chain crosses the membrane as a helical span at residues 7–27; the sequence is LIILAIFTLWVGGFGYYLYLI.

It is found in the membrane. This is an uncharacterized protein from Rickettsia prowazekii (strain Madrid E).